A 268-amino-acid polypeptide reads, in one-letter code: Putative esterase/lipase 2 (268 aa).

Residue H29 is part of the active site. S98 acts as the Charge relay system in catalysis.

This sequence belongs to the lipase/esterase LIP3/BchO family.

The sequence is that of Putative esterase/lipase 2 from Mycoplasma genitalium (strain ATCC 33530 / DSM 19775 / NCTC 10195 / G37) (Mycoplasmoides genitalium).